The chain runs to 428 residues: Tyrosine--tRNA ligase (428 aa).

L-tyrosine is bound at residue Y36. The short motif at 41 to 50 (PTAPSLHAGH) is the 'HIGH' region element. L-tyrosine-binding residues include Y171 and Q175. The 'KMSKS' region signature appears at 231–235 (KFGKS). K234 lines the ATP pocket. The S4 RNA-binding domain maps to 359 to 416 (DSIVDLLVETGLAASKGAARRNVAEGGVYVNNIRIESDEWIPQHSDFLHERWLVLRRG).

It belongs to the class-I aminoacyl-tRNA synthetase family. TyrS type 1 subfamily. As to quaternary structure, homodimer.

It is found in the cytoplasm. It catalyses the reaction tRNA(Tyr) + L-tyrosine + ATP = L-tyrosyl-tRNA(Tyr) + AMP + diphosphate + H(+). In terms of biological role, catalyzes the attachment of tyrosine to tRNA(Tyr) in a two-step reaction: tyrosine is first activated by ATP to form Tyr-AMP and then transferred to the acceptor end of tRNA(Tyr). The polypeptide is Tyrosine--tRNA ligase (Mycolicibacterium fortuitum (Mycobacterium fortuitum)).